Consider the following 98-residue polypeptide: MTPTYMNIMLAFTISLLGMLTYRSHLVASLLCLEGMMMSLFIMATLIASNTHFPLVNIMPIILLVFAACETAVGLALLISISNTYGLDYVHNLNLLQC.

A run of 3 helical transmembrane segments spans residues 1-21 (MTPT…GMLT), 27-47 (VASL…ATLI), and 61-81 (IILL…LISI).

Belongs to the complex I subunit 4L family. In terms of assembly, core subunit of respiratory chain NADH dehydrogenase (Complex I) which is composed of 45 different subunits.

It is found in the mitochondrion inner membrane. It catalyses the reaction a ubiquinone + NADH + 5 H(+)(in) = a ubiquinol + NAD(+) + 4 H(+)(out). Core subunit of the mitochondrial membrane respiratory chain NADH dehydrogenase (Complex I) which catalyzes electron transfer from NADH through the respiratory chain, using ubiquinone as an electron acceptor. Part of the enzyme membrane arm which is embedded in the lipid bilayer and involved in proton translocation. The sequence is that of NADH-ubiquinone oxidoreductase chain 4L (MT-ND4L) from Macaca fascicularis (Crab-eating macaque).